The chain runs to 1685 residues: Myomesin-1 (1685 aa).

The disordered stretch occupies residues 33 to 80 (KKRSAVYTQGSTAYSSRSSAAHRRESEAFRRASASSSQQQASQHALSS). 2 stretches are compositionally biased toward low complexity: residues 41–51 (QGSTAYSSRSS) and 63–80 (RASA…ALSS). Residue serine 113 is modified to Phosphoserine. The tract at residues 177–244 (GITTSKQSTA…TSEKKSRKVV (68 aa)) is disordered. A compositionally biased stretch (low complexity) spans 179 to 220 (TTSKQSTASKQTTASKQSTASKQSTASKQSTASRQSTASRQS). A run of 6 repeats spans residues 182–187 (KQSTAS), 188–193 (KQTTAS), 194–199 (KQSTAS), 200–205 (KQSTAS), 206–211 (KQSTAS), and 212–217 (RQSTAS). The 6 X 6 AA tandem repeats stretch occupies residues 182–217 (KQSTASKQTTASKQSTASKQSTASKQSTASRQSTAS). Positions 221-233 (VVSKQATSALQQE) are enriched in polar residues. 2 consecutive Ig-like C2-type domains span residues 277 to 368 (PEFI…ASVV) and 396 to 498 (PYGY…AYVF). Fibronectin type-III domains lie at 512-607 (APLD…ALDP), 640-734 (PPTD…VVGD), and 741-834 (APGK…VKAA). The segment at 840–938 (SPDVCPALSD…TDRAPPSPPC (99 aa)) is disordered. Residues 874 to 888 (LLGSKPNKPSLPSSS) show a composition bias toward low complexity. Residues serine 883 and serine 887 each carry the phosphoserine modification. The span at 889–902 (QNLGQTEVSKVSET) shows a compositional bias: polar residues. Positions 920 to 931 (SKSDPLKKKTDR) are enriched in basic and acidic residues. 2 consecutive Fibronectin type-III domains span residues 933-1034 (PPSP…CEEW) and 1041-1140 (PPHS…TRPG). At serine 1054 the chain carries Phosphoserine. 3 Ig-like C2-type domains span residues 1132-1230 (PVVA…EELK), 1358-1444 (PHFV…LKLV), and 1573-1662 (RVLG…FTVS). Cysteine 1160 and cysteine 1210 are disulfide-bonded.

As to quaternary structure, homodimer. Interacts with TTN/titin. Interacts with PNKD.

It is found in the cytoplasm. The protein resides in the myofibril. It localises to the sarcomere. Its subcellular location is the m line. Major component of the vertebrate myofibrillar M band. Binds myosin, titin, and light meromyosin. This binding is dose dependent. The chain is Myomesin-1 (MYOM1) from Homo sapiens (Human).